Consider the following 603-residue polypeptide: UvrABC system protein C (603 aa).

One can recognise a GIY-YIG domain in the interval 17-94; that stretch reads TTSGCYKMLN…IKTHKPDYNV (78 aa). The UVR domain maps to 199 to 234; the sequence is SEILSQIDIKLKLAVQKEDFETAIKLKEMKSSLIEI.

The protein belongs to the UvrC family. As to quaternary structure, interacts with UvrB in an incision complex.

It is found in the cytoplasm. The UvrABC repair system catalyzes the recognition and processing of DNA lesions. UvrC both incises the 5' and 3' sides of the lesion. The N-terminal half is responsible for the 3' incision and the C-terminal half is responsible for the 5' incision. In Borrelia garinii subsp. bavariensis (strain ATCC BAA-2496 / DSM 23469 / PBi) (Borreliella bavariensis), this protein is UvrABC system protein C.